We begin with the raw amino-acid sequence, 237 residues long: 2-C-methyl-D-erythritol 4-phosphate cytidylyltransferase (237 aa).

Belongs to the IspD/TarI cytidylyltransferase family. IspD subfamily.

The catalysed reaction is 2-C-methyl-D-erythritol 4-phosphate + CTP + H(+) = 4-CDP-2-C-methyl-D-erythritol + diphosphate. It participates in isoprenoid biosynthesis; isopentenyl diphosphate biosynthesis via DXP pathway; isopentenyl diphosphate from 1-deoxy-D-xylulose 5-phosphate: step 2/6. In terms of biological role, catalyzes the formation of 4-diphosphocytidyl-2-C-methyl-D-erythritol from CTP and 2-C-methyl-D-erythritol 4-phosphate (MEP). This chain is 2-C-methyl-D-erythritol 4-phosphate cytidylyltransferase, found in Vibrio vulnificus (strain CMCP6).